We begin with the raw amino-acid sequence, 136 residues long: UPF0216 protein PF0452 (136 aa).

It belongs to the UPF0216 family.

This is UPF0216 protein PF0452 from Pyrococcus furiosus (strain ATCC 43587 / DSM 3638 / JCM 8422 / Vc1).